Consider the following 495-residue polypeptide: Carbohydrate oxidase (495 aa).

The first 22 residues, 1–22 (MRSAFILALGLITASADALVTR), serve as a signal peptide directing secretion. Residues 55–229 (LPYIPTAIAQ…AVWKLATFPA (175 aa)) form the FAD-binding PCMH-type domain. Positions 92–154 (HSYASFGFGG…YGRAISHGTC (63 aa)) form a cross-link, 6-(S-cysteinyl)-8alpha-(pros-histidyl)-FAD (His-Cys). N-linked (GlcNAc...) asparagine glycosylation is found at asparagine 244 and asparagine 417.

Belongs to the oxygen-dependent FAD-linked oxidoreductase family. FAD serves as cofactor. The FAD cofactor is bound via a bicovalent 6-S-cysteinyl, 8alpha-N1-histidyl FAD linkage.

Its subcellular location is the secreted. It carries out the reaction beta-D-glucose + O2 = D-glucono-1,5-lactone + H2O2. The enzyme catalyses D-galactose + O2 = D-galactono-1,5-lactone + H2O2. It catalyses the reaction D-cellobiose + O2 = D-cellobiono-1,5-lactone + H2O2. The catalysed reaction is beta-lactose + O2 = lactobiono-1,5-lactone + H2O2. It carries out the reaction D-maltose + O2 = D-maltobiono-1,5-lactone + H2O2. The enzyme catalyses D-xylose + O2 = D-xylono-1,5-lactone + H2O2. Its function is as follows. Catalyzes the selective oxidation of C1 hydroxyl moieties on mono-, oligo- and polysaccharides with concomitant reduction of molecular oxygen to hydrogen peroxide. This results in the formation of the corresponding lactones, which typically undergo spontaneous hydrolysis. Carbohydrate oxidase is able to oxidize a variety of substrates including D-glucose, D-galactose, D-xylose, D-maltose, D-cellobiose, and lactose. In addition, among various oligosaccharides, the enzyme preferred tetrameric dextrins, indicating a favorable interaction of four linked glucose units with the substrate binding pocket. This chain is Carbohydrate oxidase, found in Microdochium nivale (Pink snow mold).